A 64-amino-acid polypeptide reads, in one-letter code: Large ribosomal subunit protein bL35 (64 aa).

The protein belongs to the bacterial ribosomal protein bL35 family.

The polypeptide is Large ribosomal subunit protein bL35 (Pelodictyon phaeoclathratiforme (strain DSM 5477 / BU-1)).